The primary structure comprises 682 residues: Nisin leader peptide-processing serine protease NisP (682 aa).

An N-terminal signal peptide occupies residues 1–22 (MKKILGFLFIVCSLGLSATVHG). The propeptide occupies 23 to 195 (ETTNSQQLLS…RKAKEVVSLR (173 aa)). Residues 231-566 (QWDMKYVTNN…VDLLNGKNKA (336 aa)) form the Peptidase S8 domain. Residues D259, H306, and S512 each act as charge relay system in the active site. The LPXTG sorting signal signature appears at 652-656 (LPVTG). A Pentaglycyl murein peptidoglycan amidated threonine modification is found at T655. Residues 656–682 (GDGEDFLPALGIVCISILGILKRKTKN) constitute a propeptide, removed by sortase.

It belongs to the peptidase S8 family.

The protein resides in the secreted. It localises to the cell wall. Its pathway is antibiotic biosynthesis; nisin biosynthesis. In terms of biological role, cleaves the lantibiotic nisin precursor peptide. The protein is Nisin leader peptide-processing serine protease NisP (nisP) of Lactococcus lactis subsp. lactis (Streptococcus lactis).